The primary structure comprises 497 residues: Glycerol kinase (497 aa).

Threonine 12 contacts ADP. Residues threonine 12, threonine 13, and serine 14 each contribute to the ATP site. A sn-glycerol 3-phosphate-binding site is contributed by threonine 12. Arginine 16 provides a ligand contact to ADP. Sn-glycerol 3-phosphate-binding residues include arginine 82, glutamate 83, tyrosine 132, and aspartate 239. Residues arginine 82, glutamate 83, tyrosine 132, aspartate 239, and glutamine 240 each coordinate glycerol. Residues threonine 261 and glycine 303 each coordinate ADP. ATP-binding residues include threonine 261, glycine 303, glutamine 307, and glycine 402. Glycine 402 and asparagine 406 together coordinate ADP.

It belongs to the FGGY kinase family. As to quaternary structure, homodimer.

The enzyme catalyses glycerol + ATP = sn-glycerol 3-phosphate + ADP + H(+). Its pathway is polyol metabolism; glycerol degradation via glycerol kinase pathway; sn-glycerol 3-phosphate from glycerol: step 1/1. Functionally, key enzyme in the regulation of glycerol uptake and metabolism. Catalyzes the phosphorylation of glycerol to yield sn-glycerol 3-phosphate. Can utilize other nucleoside triphosphates (GTP, CTP, UTP and ITP) as a phosphoryl donor. This chain is Glycerol kinase, found in Thermococcus kodakarensis (strain ATCC BAA-918 / JCM 12380 / KOD1) (Pyrococcus kodakaraensis (strain KOD1)).